Reading from the N-terminus, the 72-residue chain is Translation initiation factor IF-1 (72 aa).

The region spanning 1 to 72 (MSKEDVIEVE…TRGRITWRAK (72 aa)) is the S1-like domain.

The protein belongs to the IF-1 family. As to quaternary structure, component of the 30S ribosomal translation pre-initiation complex which assembles on the 30S ribosome in the order IF-2 and IF-3, IF-1 and N-formylmethionyl-tRNA(fMet); mRNA recruitment can occur at any time during PIC assembly.

Its subcellular location is the cytoplasm. One of the essential components for the initiation of protein synthesis. Stabilizes the binding of IF-2 and IF-3 on the 30S subunit to which N-formylmethionyl-tRNA(fMet) subsequently binds. Helps modulate mRNA selection, yielding the 30S pre-initiation complex (PIC). Upon addition of the 50S ribosomal subunit IF-1, IF-2 and IF-3 are released leaving the mature 70S translation initiation complex. The chain is Translation initiation factor IF-1 from Acetivibrio thermocellus (strain ATCC 27405 / DSM 1237 / JCM 9322 / NBRC 103400 / NCIMB 10682 / NRRL B-4536 / VPI 7372) (Clostridium thermocellum).